A 379-amino-acid polypeptide reads, in one-letter code: Elongation factor Ts, mitochondrial (379 aa).

A mitochondrion-targeting transit peptide spans 1 to 45 (MALYRTARRPLQMMLFSRLGNPEQNYSSWARKDASQSAFGMFVRL).

It belongs to the EF-Ts family.

Its subcellular location is the mitochondrion. Functionally, associates with the EF-Tu.GDP complex and induces the exchange of GDP to GTP. It remains bound to the aminoacyl-tRNA.EF-Tu.GTP complex up to the GTP hydrolysis stage on the ribosome. This Ricinus communis (Castor bean) protein is Elongation factor Ts, mitochondrial.